The primary structure comprises 348 residues: Phosphate acyltransferase (348 aa).

The protein belongs to the PlsX family. In terms of assembly, homodimer. Probably interacts with PlsY.

It is found in the cytoplasm. The enzyme catalyses a fatty acyl-[ACP] + phosphate = an acyl phosphate + holo-[ACP]. The protein operates within lipid metabolism; phospholipid metabolism. In terms of biological role, catalyzes the reversible formation of acyl-phosphate (acyl-PO(4)) from acyl-[acyl-carrier-protein] (acyl-ACP). This enzyme utilizes acyl-ACP as fatty acyl donor, but not acyl-CoA. This is Phosphate acyltransferase from Rhizobium etli (strain ATCC 51251 / DSM 11541 / JCM 21823 / NBRC 15573 / CFN 42).